The sequence spans 409 residues: Type II methyltransferase M.BsuFI (409 aa).

The SAM-dependent MTase C5-type domain occupies 101–402 (LTFIDLFAGI…GAMKERLLLA (302 aa)). Residue C170 is part of the active site.

It belongs to the class I-like SAM-binding methyltransferase superfamily. C5-methyltransferase family.

It catalyses the reaction a 2'-deoxycytidine in DNA + S-adenosyl-L-methionine = a 5-methyl-2'-deoxycytidine in DNA + S-adenosyl-L-homocysteine + H(+). A methylase, recognizes the double-stranded sequence 5'-CCGG-3', methylates C-1 on both strands, and protects the DNA from cleavage by the BsuFI endonuclease. This Bacillus subtilis protein is Type II methyltransferase M.BsuFI (hsdFM).